We begin with the raw amino-acid sequence, 338 residues long: NADPH dehydrogenase (338 aa).

22-25 (SPMC) lines the FMN pocket. Residue Tyr27 coordinates substrate. FMN is bound by residues Ala59 and Gln101. Residue 163–166 (HAAH) coordinates substrate. FMN is bound by residues Arg214 and 306 to 307 (GR).

Belongs to the NADH:flavin oxidoreductase/NADH oxidase family. NamA subfamily. As to quaternary structure, homotetramer. FMN serves as cofactor.

It carries out the reaction A + NADPH + H(+) = AH2 + NADP(+). Functionally, catalyzes the reduction of the double bond of an array of alpha,beta-unsaturated aldehydes and ketones. It also reduces the nitro group of nitroester and nitroaromatic compounds. It could have a role in detoxification processes. This Listeria welshimeri serovar 6b (strain ATCC 35897 / DSM 20650 / CCUG 15529 / CIP 8149 / NCTC 11857 / SLCC 5334 / V8) protein is NADPH dehydrogenase.